The chain runs to 382 residues: Guanine nucleotide-binding protein G(s) subunit alpha (382 aa).

Positions 1–14 (MGCFGSPTSKQSDV) are enriched in polar residues. The tract at residues 1 to 31 (MGCFGSPTSKQSDVNSEDSKSQKRRSDAISR) is disordered. A lipid anchor (N-palmitoyl glycine) is attached at G2. C3 carries the S-palmitoyl cysteine lipid modification. The segment covering 17-31 (EDSKSQKRRSDAISR) has biased composition (basic and acidic residues). In terms of domain architecture, G-alpha spans 42 to 382 (ATHRLLLLGA…RMHLRQYELL (341 aa)). The G1 motif stretch occupies residues 45–58 (RLLLLGAGESGKST). GTP-binding positions include 50–57 (GAGESGKS), 51–58 (AGESGKST), 186–192 (LRCRVLT), 211–215 (DVGGQ), 212–216 (VGGQR), 280–283 (NKQD), 281–284 (KQDL), and A354. Residues S57 and T192 each contribute to the Mg(2+) site. A G2 motif region spans residues 184 to 192 (DILRCRVLT). A G3 motif region spans residues 207-216 (FHMFDVGGQR). A G4 motif region spans residues 276 to 283 (ILFLNKQD). Residues 352 to 357 (TCAVDT) form a G5 motif region.

The protein belongs to the G-alpha family. G(s) subfamily. G proteins are composed of 3 units; alpha, beta and gamma. The alpha chain contains the guanine nucleotide binding site.

In terms of biological role, guanine nucleotide-binding proteins (G proteins) are involved as modulators or transducers in various transmembrane signaling systems. The G(s) protein is involved in hormonal regulation of adenylate cyclase: it activates the cyclase. This is Guanine nucleotide-binding protein G(s) subunit alpha (G-salpha60A) from Drosophila pseudoobscura pseudoobscura (Fruit fly).